The following is a 331-amino-acid chain: Geranylgeranyl transferase type-2 subunit beta (331 aa).

Gly2 carries the N-acetylglycine modification. Phosphothreonine is present on Thr3. 6 PFTB repeats span residues 20 to 61 (LEKH…DLMG), 68 to 109 (REEI…TLYD), 116 to 157 (VNKV…ALLG), 164 to 205 (VEKA…AITS), 212 to 253 (SDLL…KIIG), and 260 to 302 (REKL…SLLG). A geranylgeranyl diphosphate-binding site is contributed by 190–192 (HAG). 2 residues coordinate Zn(2+): Asp238 and Cys240. 241-244 (YSWW) provides a ligand contact to geranylgeranyl diphosphate. Zn(2+) is bound at residue His290.

Belongs to the protein prenyltransferase subunit beta family. In terms of assembly, heterotrimer composed of RABGGTA, RABGGTB and CHM; within this trimer, RABGGTA and RABGGTB form the catalytic component B, while CHM (component A) mediates peptide substrate binding. The Rab GGTase dimer (RGGT) interacts with CHM (component A) prior to Rab protein binding; the association is stabilized by geranylgeranyl pyrophosphate (GGpp). The CHM:RGGT:Rab complex is destabilized by GGpp. Interaction of RABGGTB with prenylated PTP4A2 precludes its association with RABGGTA and inhibits enzyme activity. Interacts with CHODL. Interacts with non-phosphorylated form of RAB8A; phosphorylation of RAB8A at 'Thr-72' disrupts this interaction. Zn(2+) is required as a cofactor.

The enzyme catalyses geranylgeranyl diphosphate + L-cysteinyl-[protein] = S-geranylgeranyl-L-cysteinyl-[protein] + diphosphate. Its activity is regulated as follows. The enzymatic reaction requires the aid of a Rab escort protein (also called component A). Functionally, catalyzes the transfer of a geranylgeranyl moiety from geranylgeranyl diphosphate to both cysteines of Rab proteins with the C-terminal sequence -XXCC, -XCXC and -CCXX, such as RAB1A, RAB3A, RAB5A and RAB7A. This is Geranylgeranyl transferase type-2 subunit beta (RABGGTB) from Homo sapiens (Human).